The following is a 311-amino-acid chain: Malate dehydrogenase (311 aa).

Residues 7–13 and aspartate 34 each bind NAD(+); that span reads GAAGGIG. 2 residues coordinate substrate: arginine 81 and arginine 87. NAD(+) is bound by residues asparagine 94 and 117 to 119; that span reads ITN. The substrate site is built by asparagine 119 and arginine 153. Catalysis depends on histidine 177, which acts as the Proton acceptor. NAD(+) is bound at residue methionine 227.

The protein belongs to the LDH/MDH superfamily. MDH type 1 family. In terms of assembly, homodimer.

The enzyme catalyses (S)-malate + NAD(+) = oxaloacetate + NADH + H(+). Its function is as follows. Catalyzes the reversible oxidation of malate to oxaloacetate. This Shewanella amazonensis (strain ATCC BAA-1098 / SB2B) protein is Malate dehydrogenase.